Consider the following 123-residue polypeptide: NHL-repeat-containing protein 4 (123 aa).

NHL repeat units follow at residues 35 to 78 and 79 to 119; these read QPLG…FPRA and GPPI…YQGL.

The polypeptide is NHL-repeat-containing protein 4 (NHLRC4) (Homo sapiens (Human)).